Here is a 443-residue protein sequence, read N- to C-terminus: Endoplasmic reticulum protein SC65 (443 aa).

The signal sequence occupies residues 1–18 (MARAAWGLLWLLLGSAGA). The tract at residues 81 to 102 (SGPATSQPRPAPGPDGDNEGDG) is disordered. N-linked (GlcNAc...) asparagine glycosylation occurs at N367. Composition is skewed to acidic residues over residues 387-398 (DEMELEETESLP), 407-419 (AEFE…EEGL), and 431-443 (GDED…PELA). Residues 387 to 443 (DEMELEETESLPEPEKPLSDAEFEGEGDYEEGLYADWWQEPDAKGDEDEAEPEPELA) are disordered.

Belongs to the leprecan family. In terms of assembly, interacts with PLOD1, P3H3 and PPIB. Identified in a complex with PLOD1 and P3H3. In terms of tissue distribution, found in testis, brain, heart and at a much lower level in liver.

It localises to the endoplasmic reticulum. Its function is as follows. Part of a complex composed of PLOD1, P3H3 and P3H4 that catalyzes hydroxylation of lysine residues in collagen alpha chains and is required for normal assembly and cross-linking of collagen fibrils. Required for normal bone density and normal skin stability via its role in hydroxylation of lysine residues in collagen alpha chains and in collagen fibril assembly. This chain is Endoplasmic reticulum protein SC65, found in Rattus norvegicus (Rat).